A 259-amino-acid polypeptide reads, in one-letter code: Hydroxyacylglutathione hydrolase (259 aa).

Zn(2+) contacts are provided by H56, H58, D60, H61, H112, D133, and H171. Residues 224 to 238 (RTRETSVKEKADERS) are compositionally biased toward basic and acidic residues. Residues 224 to 245 (RTRETSVKEKADERSSGQNTSQ) are disordered.

The protein belongs to the metallo-beta-lactamase superfamily. Glyoxalase II family. In terms of assembly, monomer. Zn(2+) is required as a cofactor.

The enzyme catalyses an S-(2-hydroxyacyl)glutathione + H2O = a 2-hydroxy carboxylate + glutathione + H(+). It functions in the pathway secondary metabolite metabolism; methylglyoxal degradation; (R)-lactate from methylglyoxal: step 2/2. Thiolesterase that catalyzes the hydrolysis of S-D-lactoyl-glutathione to form glutathione and D-lactic acid. This chain is Hydroxyacylglutathione hydrolase, found in Pseudomonas savastanoi pv. phaseolicola (strain 1448A / Race 6) (Pseudomonas syringae pv. phaseolicola (strain 1448A / Race 6)).